Consider the following 749-residue polypeptide: Ribosome-releasing factor 2, mitochondrial (749 aa).

Residues 1-22 (MLLLLCNRSVVPRGIRRILRTA) constitute a mitochondrion transit peptide. Residues 44–322 (KNIRNIGILA…AVLKYLPAPN (279 aa)) form the tr-type G domain. GTP-binding positions include 53 to 60 (AHIDGGKT), 117 to 121 (DTPGH), and 171 to 174 (NKMD).

The protein belongs to the TRAFAC class translation factor GTPase superfamily. Classic translation factor GTPase family. EF-G/EF-2 subfamily.

Its subcellular location is the mitochondrion. Mitochondrial GTPase that mediates the disassembly of ribosomes from messenger RNA at the termination of mitochondrial protein biosynthesis. Not involved in the GTP-dependent ribosomal translocation step during translation elongation. The sequence is that of Ribosome-releasing factor 2, mitochondrial from Culex quinquefasciatus (Southern house mosquito).